Consider the following 432-residue polypeptide: UDP-N-acetylmuramate--L-alanine ligase (432 aa).

ATP is bound at residue 109–115; it reads GAHGKST.

Belongs to the MurCDEF family.

Its subcellular location is the cytoplasm. The enzyme catalyses UDP-N-acetyl-alpha-D-muramate + L-alanine + ATP = UDP-N-acetyl-alpha-D-muramoyl-L-alanine + ADP + phosphate + H(+). Its pathway is cell wall biogenesis; peptidoglycan biosynthesis. In terms of biological role, cell wall formation. This Campylobacter jejuni subsp. jejuni serotype O:2 (strain ATCC 700819 / NCTC 11168) protein is UDP-N-acetylmuramate--L-alanine ligase.